Consider the following 60-residue polypeptide: Large ribosomal subunit protein bL32 (60 aa).

Residues 1–20 show a composition bias toward basic residues; that stretch reads MAKPARHTSKAKRNKRRTHY. The disordered stretch occupies residues 1–22; the sequence is MAKPARHTSKAKRNKRRTHYKL.

Belongs to the bacterial ribosomal protein bL32 family.

The chain is Large ribosomal subunit protein bL32 from Streptococcus agalactiae serotype V (strain ATCC BAA-611 / 2603 V/R).